The primary structure comprises 414 residues: CinA-like protein (414 aa).

The protein belongs to the CinA family.

In Koribacter versatilis (strain Ellin345), this protein is CinA-like protein.